Reading from the N-terminus, the 91-residue chain is C-C motif chemokine 5 (91 aa).

The N-terminal stretch at 1–23 (MKVSAARLAVILVATALCAPASA) is a signal peptide. Intrachain disulfides connect Cys33-Cys57 and Cys34-Cys73.

It belongs to the intercrine beta (chemokine CC) family.

The protein localises to the secreted. Chemoattractant for blood monocytes, memory T-helper cells and eosinophils. Causes the release of histamine from basophils and activates eosinophils. May activate several chemokine receptors including CCR1, CCR3, CCR4 and CCR5. May also be an agonist of the G protein-coupled receptor GPR75. Together with GPR75, may play a role in neuron survival through activation of a downstream signaling pathway involving the PI3, Akt and MAP kinases. By activating GPR75 may also play a role in insulin secretion by islet cells. The protein is C-C motif chemokine 5 (CCL5) of Macaca mulatta (Rhesus macaque).